The following is a 242-amino-acid chain: Small ribosomal subunit protein uS2 (242 aa).

This sequence belongs to the universal ribosomal protein uS2 family.

This is Small ribosomal subunit protein uS2 from Shewanella frigidimarina (strain NCIMB 400).